A 407-amino-acid chain; its full sequence is Dephospho-CoA kinase (407 aa).

In terms of domain architecture, DPCK spans 3 to 204 (RIGLTGGIGA…QPFAHNLAQR (202 aa)). Position 11–16 (11–16 (GAGKSL)) interacts with ATP. The segment at 196 to 407 (PFAHNLAQRQ…EWADAVHWRP (212 aa)) is UPF0157.

This sequence in the N-terminal section; belongs to the CoaE family. The protein in the C-terminal section; belongs to the UPF0157 (GrpB) family.

The protein resides in the cytoplasm. It catalyses the reaction 3'-dephospho-CoA + ATP = ADP + CoA + H(+). It functions in the pathway cofactor biosynthesis; coenzyme A biosynthesis; CoA from (R)-pantothenate: step 5/5. Catalyzes the phosphorylation of the 3'-hydroxyl group of dephosphocoenzyme A to form coenzyme A. The sequence is that of Dephospho-CoA kinase from Mycobacterium bovis (strain ATCC BAA-935 / AF2122/97).